A 280-amino-acid polypeptide reads, in one-letter code: Myelin proteolipid protein A (280 aa).

At 1–10 (MGWHDGCIRC) the chain is on the cytoplasmic side. S-palmitoyl cysteine attachment occurs at residues cysteine 7 and cysteine 10. Residues 11 to 36 (MVGVPFASVIATVLCFAGVALFCGCG) traverse the membrane as a helical segment. The Extracellular segment spans residues 37-59 (HEALSGTEKLIETYFSKNYQEYE). The helical transmembrane segment at 60–88 (YLIHVINAFQYVIYGIAIFFFLFGILLLA) threads the bilayer. Topologically, residues 89–152 (EGFYTTTAIK…LGKWLGHPDK (64 aa)) are cytoplasmic. S-palmitoyl cysteine attachment occurs at residues cysteine 140 and cysteine 142. The chain crosses the membrane as a helical span at residues 153–179 (FVGVTYIITILWILIFACSAVPVYIYF). At 180–239 (NTWVTCQSIAFPGKTTTSVSTLCSDARMYGVLPWNAFPGKVCGTSLLAICKTSEFQMTFH) the chain is on the extracellular side. 2 cysteine pairs are disulfide-bonded: cysteine 185/cysteine 229 and cysteine 202/cysteine 221. Residues 240–269 (LFIAAFVGAAATLVALLTYMVGASFNYAVL) traverse the membrane as a helical segment. Residues 270 to 280 (RVTGRSDRSKF) are Cytoplasmic-facing.

This sequence belongs to the myelin proteolipid protein family.

It localises to the cell membrane. Functionally, this is the major myelin protein from the central nervous system. It plays an important role in the formation or maintenance of the multilamellar structure of myelin. This chain is Myelin proteolipid protein A (plp1-a), found in Xenopus laevis (African clawed frog).